A 640-amino-acid polypeptide reads, in one-letter code: Probable potassium transport system protein Kup (640 aa).

12 consecutive transmembrane segments (helical) span residues Ile-26–Leu-46, Ile-69–Ile-89, Ala-117–Ile-137, Pro-155–Ile-175, Ile-186–Ile-206, Phe-224–Thr-244, Trp-265–Leu-285, Leu-297–Ile-317, Ile-355–Phe-375, Ala-384–Val-404, Ala-415–Val-435, and Ile-437–Thr-457.

The protein belongs to the HAK/KUP transporter (TC 2.A.72) family.

The protein localises to the cell inner membrane. It catalyses the reaction K(+)(in) + H(+)(in) = K(+)(out) + H(+)(out). Transport of potassium into the cell. Likely operates as a K(+):H(+) symporter. In Aromatoleum aromaticum (strain DSM 19018 / LMG 30748 / EbN1) (Azoarcus sp. (strain EbN1)), this protein is Probable potassium transport system protein Kup.